Reading from the N-terminus, the 334-residue chain is Phospholipase A1 1 (334 aa).

The signal sequence occupies residues 1-23; sequence MMNLKYLLFFCLVQALHYCYAYG. Residues 24–33 constitute a propeptide that is removed on maturation; sequence DPSLSNELDR. C37 and C120 are oxidised to a cystine. Catalysis depends on S170, which acts as the Nucleophile. D198 functions as the Charge relay system in the catalytic mechanism. 2 cysteine pairs are disulfide-bonded: C209–C214 and C252–C261. Residue H263 is the Charge relay system of the active site. 3 cysteine pairs are disulfide-bonded: C278–C302, C279–C327, and C295–C300.

It belongs to the AB hydrolase superfamily. Lipase family. Not glycosylated. As to expression, expressed by the venom gland.

The protein resides in the secreted. It carries out the reaction a 1,2-diacyl-sn-glycero-3-phosphocholine + H2O = a 2-acyl-sn-glycero-3-phosphocholine + a fatty acid + H(+). Its function is as follows. Catalyzes the hydrolysis of phosphatidylcholine with phospholipase A1 activity (3.6 U/ml). May act as an allergen and induce hemolytic activity. In vivo, a mixture of this protein and Ves a 1.02 is able to paralyze crickets. The polypeptide is Phospholipase A1 1 (Vespa affinis (Lesser banded hornet)).